The chain runs to 291 residues: ATP synthase gamma chain (291 aa).

It belongs to the ATPase gamma chain family. As to quaternary structure, F-type ATPases have 2 components, CF(1) - the catalytic core - and CF(0) - the membrane proton channel. CF(1) has five subunits: alpha(3), beta(3), gamma(1), delta(1), epsilon(1). CF(0) has three main subunits: a, b and c.

The protein resides in the cell inner membrane. In terms of biological role, produces ATP from ADP in the presence of a proton gradient across the membrane. The gamma chain is believed to be important in regulating ATPase activity and the flow of protons through the CF(0) complex. In Neisseria meningitidis serogroup A / serotype 4A (strain DSM 15465 / Z2491), this protein is ATP synthase gamma chain.